Here is a 647-residue protein sequence, read N- to C-terminus: DNA topoisomerase 4 subunit B (647 aa).

ATP is bound by residues Y11, N51, D78, 118-124 (GLHGVGS), and K344. Positions 391-401 (AARKARDESRN) are enriched in basic and acidic residues. The disordered stretch occupies residues 391–421 (AARKARDESRNGKKNKKDKGLLSGKLTPAQS). Positions 427–541 (NELYLVEGDS…AGHVYIALPP (115 aa)) constitute a Toprim domain. E433, D506, and D508 together coordinate Mg(2+).

It belongs to the type II topoisomerase family. ParE type 2 subfamily. As to quaternary structure, heterotetramer composed of ParC and ParE. Requires Mg(2+) as cofactor. The cofactor is Mn(2+). It depends on Ca(2+) as a cofactor.

It catalyses the reaction ATP-dependent breakage, passage and rejoining of double-stranded DNA.. With respect to regulation, inhibited by quinolones, such as levofloxacin. Topoisomerase IV is essential for chromosome segregation. It relaxes supercoiled DNA. Performs the decatenation events required during the replication of a circular DNA molecule. The polypeptide is DNA topoisomerase 4 subunit B (Streptococcus pneumoniae serotype 4 (strain ATCC BAA-334 / TIGR4)).